The primary structure comprises 343 residues: MSNIDKEKAVAAALAQIEKSYGKGSVMKLGQRPNVDIESVSTGSLGLDIALGIGGVPKGRIIEIFGPESSGKTTLTLHLIAEAQKKGGTCAFIDAEHALDPAYAKKLGVNIDELIISQPDTGEQALEIADTLIRSGGIDMIIIDSVAALVPKSEIEGEMGDAQMASQARLMSQALRKLTASINRTNCITVFINQIRMKIGVMFGSPETTTGGNALKFYASVRIDIRRIGSIKDKEEVIGSQTKVKVVKNKVSPPFKTADFDIMYGSGISKEGEIIDLGVKLDIIEKSGSWFSYNSVRIGQGRENVKQYLKDNPKISNEIEKLVREKSSKVTNINFEQEEEVND.

Residue 66–73 (GPESSGKT) coordinates ATP.

It belongs to the RecA family.

It localises to the cytoplasm. Functionally, can catalyze the hydrolysis of ATP in the presence of single-stranded DNA, the ATP-dependent uptake of single-stranded DNA by duplex DNA, and the ATP-dependent hybridization of homologous single-stranded DNAs. It interacts with LexA causing its activation and leading to its autocatalytic cleavage. This chain is Protein RecA, found in Rickettsia bellii (strain OSU 85-389).